We begin with the raw amino-acid sequence, 202 residues long: Protein DCV1 (202 aa).

Positions 1-18 (MLNYKLILLFSSFLQLIS) are cleaved as a signal peptide. The next 3 membrane-spanning stretches (helical) occupy residues 91–107 (IGGL…LTFI), 137–155 (ILTL…LLCM), and 168–189 (LVWL…FLSF).

The protein localises to the membrane. The chain is Protein DCV1 (DCV1) from Saccharomyces cerevisiae (strain ATCC 204508 / S288c) (Baker's yeast).